The sequence spans 208 residues: Holliday junction branch migration complex subunit RuvA (208 aa).

The segment at 1–64 (MIGKLKGIVD…EDMIRLYGFR (64 aa)) is domain I. The segment at 65 to 143 (VDAEREWFRL…AFAPIDPALI (79 aa)) is domain II. Residues 144-152 (ALTGAVEDR) are flexible linker. A domain III region spans residues 153–208 (TAPQPVADAISALVNLGYAQIQASAAIAAALKGLGEEAGTVEAKTLIRLGLRELAR).

The protein belongs to the RuvA family. Homotetramer. Forms an RuvA(8)-RuvB(12)-Holliday junction (HJ) complex. HJ DNA is sandwiched between 2 RuvA tetramers; dsDNA enters through RuvA and exits via RuvB. An RuvB hexamer assembles on each DNA strand where it exits the tetramer. Each RuvB hexamer is contacted by two RuvA subunits (via domain III) on 2 adjacent RuvB subunits; this complex drives branch migration. In the full resolvosome a probable DNA-RuvA(4)-RuvB(12)-RuvC(2) complex forms which resolves the HJ.

The protein localises to the cytoplasm. The RuvA-RuvB-RuvC complex processes Holliday junction (HJ) DNA during genetic recombination and DNA repair, while the RuvA-RuvB complex plays an important role in the rescue of blocked DNA replication forks via replication fork reversal (RFR). RuvA specifically binds to HJ cruciform DNA, conferring on it an open structure. The RuvB hexamer acts as an ATP-dependent pump, pulling dsDNA into and through the RuvAB complex. HJ branch migration allows RuvC to scan DNA until it finds its consensus sequence, where it cleaves and resolves the cruciform DNA. In Methylorubrum extorquens (strain CM4 / NCIMB 13688) (Methylobacterium extorquens), this protein is Holliday junction branch migration complex subunit RuvA.